Reading from the N-terminus, the 264-residue chain is Thymidylate synthase (264 aa).

DUMP is bound at residue Arg21. Position 51 (His51) interacts with (6R)-5,10-methylene-5,6,7,8-tetrahydrofolate. 126 to 127 (RR) contacts dUMP. Cys146 serves as the catalytic Nucleophile. DUMP-binding positions include 166–169 (RSCD), Asn177, and 207–209 (HLY). Asp169 contacts (6R)-5,10-methylene-5,6,7,8-tetrahydrofolate. Ala263 is a (6R)-5,10-methylene-5,6,7,8-tetrahydrofolate binding site.

It belongs to the thymidylate synthase family. Bacterial-type ThyA subfamily. As to quaternary structure, homodimer.

The protein resides in the cytoplasm. It catalyses the reaction dUMP + (6R)-5,10-methylene-5,6,7,8-tetrahydrofolate = 7,8-dihydrofolate + dTMP. It functions in the pathway pyrimidine metabolism; dTTP biosynthesis. Its function is as follows. Catalyzes the reductive methylation of 2'-deoxyuridine-5'-monophosphate (dUMP) to 2'-deoxythymidine-5'-monophosphate (dTMP) while utilizing 5,10-methylenetetrahydrofolate (mTHF) as the methyl donor and reductant in the reaction, yielding dihydrofolate (DHF) as a by-product. This enzymatic reaction provides an intracellular de novo source of dTMP, an essential precursor for DNA biosynthesis. The chain is Thymidylate synthase from Edwardsiella ictaluri (strain 93-146).